The sequence spans 127 residues: Small ribosomal subunit protein uS12 (127 aa).

Aspartate 89 carries the post-translational modification 3-methylthioaspartic acid.

It belongs to the universal ribosomal protein uS12 family. Part of the 30S ribosomal subunit. Contacts proteins S8 and S17. May interact with IF1 in the 30S initiation complex.

Functionally, with S4 and S5 plays an important role in translational accuracy. In terms of biological role, interacts with and stabilizes bases of the 16S rRNA that are involved in tRNA selection in the A site and with the mRNA backbone. Located at the interface of the 30S and 50S subunits, it traverses the body of the 30S subunit contacting proteins on the other side and probably holding the rRNA structure together. The combined cluster of proteins S8, S12 and S17 appears to hold together the shoulder and platform of the 30S subunit. The chain is Small ribosomal subunit protein uS12 from Campylobacter lari (strain RM2100 / D67 / ATCC BAA-1060).